The following is a 380-amino-acid chain: Beta sliding clamp (380 aa).

Belongs to the beta sliding clamp family. Forms a ring-shaped head-to-tail homodimer around DNA which binds and tethers DNA polymerases and other proteins to the DNA. The DNA replisome complex has a single clamp-loading complex (3 tau and 1 each of delta, delta', psi and chi subunits) which binds 3 Pol III cores (1 core on the leading strand and 2 on the lagging strand) each with a beta sliding clamp dimer. Additional proteins in the replisome are other copies of gamma, psi and chi, Ssb, DNA helicase and RNA primase.

The protein localises to the cytoplasm. Functionally, confers DNA tethering and processivity to DNA polymerases and other proteins. Acts as a clamp, forming a ring around DNA (a reaction catalyzed by the clamp-loading complex) which diffuses in an ATP-independent manner freely and bidirectionally along dsDNA. Initially characterized for its ability to contact the catalytic subunit of DNA polymerase III (Pol III), a complex, multichain enzyme responsible for most of the replicative synthesis in bacteria; Pol III exhibits 3'-5' exonuclease proofreading activity. The beta chain is required for initiation of replication as well as for processivity of DNA replication. This Lactococcus lactis subsp. lactis (strain IL1403) (Streptococcus lactis) protein is Beta sliding clamp (dnaN).